We begin with the raw amino-acid sequence, 814 residues long: Cellulase/esterase CelE (814 aa).

An N-terminal signal peptide occupies residues 1-34 (MKKIVSLVCVLVMLVSILGSFSVVAASPVKGFQV). The interval 35 to 354 (SGTKLLDASG…AVFWWDNGYY (320 aa)) is cellulase. The active-site Proton donor; for cellulase activity is Glu-193. Glu-316 serves as the catalytic Nucleophile; for cellulase activity. The Dockerin domain maps to 409–479 (ANILYGDVNG…LLRSIDKFPA (71 aa)). Asp-415, Asn-417, Asp-419, Gly-420, Lys-421, Asp-426, Asp-451, Val-452, Asn-453, Asp-455, Lys-457, and Asp-462 together coordinate Ca(2+). Residues 490 to 814 (PGILYNGRFD…TAEIKNKLGW (325 aa)) form an esterase region. The Nucleophile; for esterase activity role is filled by Ser-612.

It in the N-terminal section; belongs to the glycosyl hydrolase 5 (cellulase A) family. The protein in the C-terminal section; belongs to the carbohydrate esterase 2 (CE2) family.

It localises to the secreted. It catalyses the reaction Endohydrolysis of (1-&gt;4)-beta-D-glucosidic linkages in cellulose, lichenin and cereal beta-D-glucans.. It carries out the reaction Deacetylation of xylans and xylo-oligosaccharides.. Its pathway is glycan metabolism; cellulose degradation. The protein operates within glycan degradation; xylan degradation. Esterase activity of the CE2 module is inhibited when this domain binds to cellohexaose or beta-glucan. Multifunctional enzyme involved in the degradation of plant cell wall polysaccharides. Displays endoglucanase activity against carboxymethyl cellulose (CMC) and barley beta-glucan. Also catalyzes the deacetylation of acetylated birchwood xylan and glucomannan, with a preference for the latter, and of the synthetic substrate 4-nitrophenyl acetate (4-NPAc). This chain is Cellulase/esterase CelE, found in Acetivibrio thermocellus (strain ATCC 27405 / DSM 1237 / JCM 9322 / NBRC 103400 / NCIMB 10682 / NRRL B-4536 / VPI 7372) (Clostridium thermocellum).